Consider the following 106-residue polypeptide: Small ribosomal subunit protein uS10 (106 aa).

It belongs to the universal ribosomal protein uS10 family. Part of the 30S ribosomal subunit.

Involved in the binding of tRNA to the ribosomes. The chain is Small ribosomal subunit protein uS10 from Synechococcus sp. (strain CC9902).